A 787-amino-acid polypeptide reads, in one-letter code: LPS-assembly protein LptD (787 aa).

The first 39 residues, 1-39, serve as a signal peptide directing secretion; sequence MPRKTLLPLVPACDAAPRRKRLAAALLAVPGLVPAVSQA.

This sequence belongs to the LptD family. Component of the lipopolysaccharide transport and assembly complex. Interacts with LptE and LptA.

It localises to the cell outer membrane. Together with LptE, is involved in the assembly of lipopolysaccharide (LPS) at the surface of the outer membrane. The protein is LPS-assembly protein LptD of Burkholderia thailandensis (strain ATCC 700388 / DSM 13276 / CCUG 48851 / CIP 106301 / E264).